Reading from the N-terminus, the 209-residue chain is Ribosomal RNA large subunit methyltransferase E (209 aa).

Residues G63, W65, D83, D99, and D124 each contribute to the S-adenosyl-L-methionine site. K164 (proton acceptor) is an active-site residue.

This sequence belongs to the class I-like SAM-binding methyltransferase superfamily. RNA methyltransferase RlmE family.

It is found in the cytoplasm. The catalysed reaction is uridine(2552) in 23S rRNA + S-adenosyl-L-methionine = 2'-O-methyluridine(2552) in 23S rRNA + S-adenosyl-L-homocysteine + H(+). Its function is as follows. Specifically methylates the uridine in position 2552 of 23S rRNA at the 2'-O position of the ribose in the fully assembled 50S ribosomal subunit. The chain is Ribosomal RNA large subunit methyltransferase E from Pseudoalteromonas atlantica (strain T6c / ATCC BAA-1087).